Reading from the N-terminus, the 786-residue chain is Toll-like receptor 1 (786 aa).

An N-terminal signal peptide occupies residues 1–24 (MTSIFHFAIIFMLILQIRIQLSEE). Topologically, residues 25-580 (SEFLVDRSKN…HMSELSCNIT (556 aa)) are extracellular. N-linked (GlcNAc...) asparagine glycosylation occurs at Asn-51. LRR repeat units follow at residues 54–77 (QNYISELWTSDILSLSKLRILIIS), 78–101 (HNRIQYLDISVFKFNQELEYLDLS), 102–125 (HNKLVKISCHPTVNLKHLDLSFNA), 126–150 (FDALPICKEFGNMSQLKFLGLSTTH), 151–175 (LEKSSVLPIAHLNISKVLLVLGETY), 176–199 (GEKEDPEGLQDFNTESLHIVFPTN), 200–223 (KEFHFILDVSVKTVANLELSNIKC), 224–250 (VLEDNKCSYFLSILAKLQTNPKLSNLT), 251–278 (LNNIETTWNSFIRILQLVWHTTVWYFSI), 279–308 (SNVKLQGQLDFRDFDYSGTSLKALSIHQVV), 309–337 (SDVFGFPQSYIYEIFSNMNIKNFTVSGTR), 338–361 (MVHMLCPSKISPFLHLDFSNNLLT), 362–388 (DTVFENCGHLTELETLILQMNQLKELS), 389–414 (KIAEMTTQMKSLQQLDISQNSVSYDE), 415–437 (KKGDCSWTKSLLSLNMSSNILTD), 438–457 (TIFRCLPPRIKVLDLHSNKI), 458–478 (KSIPKQVVKLEALQELNVAFN), 479–500 (SLTDLPGCGSFSSLSVLIIDHN), and 501–524 (SVSHPSADFFQSCQKMRSIKAGDN). The cysteines at positions 110 and 132 are disulfide-linked. Residues Asn-137 and Asn-163 are each glycosylated (N-linked (GlcNAc...) asparagine). Cys-223 and Cys-230 are oxidised to a cystine. Residues 313–316 (GFPQ) form an interaction with bacterial lipopeptide region. Asn-330 carries an N-linked (GlcNAc...) asparagine glycan. A disulfide bond links Cys-343 and Cys-368. A disulfide bridge links Cys-419 with Cys-442. Asn-429 carries N-linked (GlcNAc...) asparagine glycosylation. Positions 525–579 (PFQCTCELGEFVKNIDQVSSEVLEGWPDSYKCDYPESYRGTLLKDFHMSELSCNI) constitute an LRRCT domain. The N-linked (GlcNAc...) asparagine glycan is linked to Asn-578. Residues 581–601 (LLIVTIVATMLVLAVTVTSLC) form a helical membrane-spanning segment. Topologically, residues 602 to 786 (SYLDLPWYLR…NIKLTEQAKK (185 aa)) are cytoplasmic. Residues 635-776 (LQFHAFISYS…LFWANLRAAI (142 aa)) enclose the TIR domain.

Belongs to the Toll-like receptor family. As to quaternary structure, interacts (via extracellular domain) with TLR2. TLR2 seems to exist in heterodimers with either TLR1 or TLR6 before stimulation by the ligand. The heterodimers form bigger oligomers in response to their corresponding ligands as well as further heterotypic associations with other receptors such as CD14 and/or CD36. The activation cluster TLR2:TLR1:CD14 forms in response to triacylated lipopeptides. Binds MYD88 (via TIR domain). Interacts with CNPY3. Interacts with neutrophil recruitment protein from Aedes aegypti saliva; the interaction probably promotes activation of canonical NF-kappa-B signaling in skin-resident macrophages and subsequent expression of neutrophil chemoattractants. As to expression, ubiquitous. Highly expressed in spleen, ovary, peripheral blood leukocytes, thymus and small intestine.

The protein localises to the cell membrane. The protein resides in the cytoplasmic vesicle. Its subcellular location is the phagosome membrane. It is found in the membrane raft. It localises to the golgi apparatus. Its function is as follows. Participates in the innate immune response to microbial agents. Specifically recognizes diacylated and triacylated lipopeptides. Cooperates with TLR2 to mediate the innate immune response to bacterial lipoproteins or lipopeptides. Forms the activation cluster TLR2:TLR1:CD14 in response to triacylated lipopeptides, this cluster triggers signaling from the cell surface and subsequently is targeted to the Golgi in a lipid-raft dependent pathway. Acts via MYD88 and TRAF6, leading to NF-kappa-B activation, cytokine secretion and the inflammatory response. The protein is Toll-like receptor 1 (TLR1) of Homo sapiens (Human).